Consider the following 137-residue polypeptide: Leaf-specific thionin (137 aa).

The first 28 residues, 1–28 (MATNKSIKSVVICVLILGLVLEQVQVEA), serve as a signal peptide directing secretion. 4 disulfide bridges follow: cysteine 31–cysteine 68, cysteine 32–cysteine 60, cysteine 40–cysteine 58, and cysteine 44–cysteine 54. A propeptide spans 75–137 (LNLLPESGEP…DGEVIQSVEA (63 aa)) (acidic domain).

Belongs to the plant thionin (TC 1.C.44) family. 4 C-C subfamily.

It is found in the secreted. Thionins are small plant proteins which are toxic to animal cells. They seem to exert their toxic effect at the level of the cell membrane. Their precise function is not known. This is Leaf-specific thionin (THI1.5) from Hordeum vulgare (Barley).